Consider the following 743-residue polypeptide: Tegument protein UL46 homolog (743 aa).

Disordered regions lie at residues 437–481 (GCPP…VSSA), 522–590 (HQRS…SGYM), and 693–743 (RVRL…VSSL). Residues 526–552 (DSSSSDNSSCSSTETEYITISSTPSPT) show a composition bias toward low complexity. Composition is skewed to polar residues over residues 573–586 (QPAN…SPAN) and 697–716 (GTTT…TPSS). Low complexity predominate over residues 722–743 (RTLSTSESPESSPEQQERVSSL).

The protein belongs to the herpesviridae HHV-1 VP11/12 protein family. As to quaternary structure, interacts with VP16.

The protein resides in the virion tegument. It is found in the host cell membrane. Abundant tegument protein. Trans-activates the immediate early genes. This Equus caballus (Horse) protein is Tegument protein UL46 homolog.